A 467-amino-acid polypeptide reads, in one-letter code: MKEDKENTRPREKKVEIKCDENDKQEKPCKEKKEAMTKIVIRRLPPTLTKEDLEEQLQPLPELDYLEFFSSDTSLFPHLFARAYLNFKNQDDIVLFRDRFDGYVFIDNRGQEYPAIVEFAPFQKVAKKRSKKKDAKSGTIDDDADYKKFLEFYNGDEEKSPSNPEILLEEIEAKTKELSSKKTTPLLDFLKNKQRIREEKKEERRRREIERKRLREEERRKWREEDRRKRKEAEKLKKVEKAFEKDKDQHKDEQPKIKLLRKPEKADDGETEKPKDKPKKQDRERQKEDRPSGGDLKKRQNGEHREEKGGKPEDVGHKEYRDRDGERERDRDRERERRQKEKERIRRQDEERRRRREHQDGENNYRKREEEGKKDKERVWEKRKNEHTGESSGSARPEKSSRDSKKEESARKDRLRNKDRPAIQLYQPGSRNRTRGGGGGGGTGGDGPAAEKRAEREAKKNQEKAAE.

Disordered stretches follow at residues 1–30 and 197–467; these read MKEDKENTRPREKKVEIKCDENDKQEKPCK and REEK…KAAE. 2 stretches are compositionally biased toward basic and acidic residues: residues 197–389 and 396–421; these read REEK…EHTG and RPEKSSRDSKKEESARKDRLRNKDRP. The span at 435-447 shows a compositional bias: gly residues; that stretch reads RGGGGGGGTGGDG. Residues 449–467 are compositionally biased toward basic and acidic residues; that stretch reads AAEKRAEREAKKNQEKAAE.

This sequence belongs to the RENT3 family.

It localises to the nucleus. The protein localises to the cytoplasm. Its function is as follows. Involved in nonsense-mediated decay (NMD) of mRNAs containing premature stop codons by associating with the nuclear exon junction complex (EJC) and serving as link between the EJC core and NMD machinery. Recruits UPF2 at the cytoplasmic side of the nuclear envelope and the subsequent formation of an UPF1-UPF2-UPF3 surveillance complex (including UPF1 bound to release factors at the stalled ribosome) is believed to activate NMD. In cooperation with UPF2 stimulates both ATPase and RNA helicase activities of UPF1. Binds spliced mRNA upstream of exon-exon junctions. This is Regulator of nonsense transcripts 3B from Danio rerio (Zebrafish).